Consider the following 128-residue polypeptide: MEVVNALGRRKRAVARVFVSEGTGKITINKRDLAQYFPSTILQYVVKQPLNKLEAAEKYDIKVNLYGGGFTGQSQALRLAIARALVKINPEDKTALRSEGFMTRDSRSVERKKPGQPKARRRFQFSKR.

Over residues 97 to 113 (RSEGFMTRDSRSVERKK) the composition is skewed to basic and acidic residues. Residues 97 to 128 (RSEGFMTRDSRSVERKKPGQPKARRRFQFSKR) are disordered. Residues 114 to 128 (PGQPKARRRFQFSKR) show a composition bias toward basic residues.

This sequence belongs to the universal ribosomal protein uS9 family.

This Phocaeicola vulgatus (strain ATCC 8482 / DSM 1447 / JCM 5826 / CCUG 4940 / NBRC 14291 / NCTC 11154) (Bacteroides vulgatus) protein is Small ribosomal subunit protein uS9.